The chain runs to 249 residues: Hydroxyacylglutathione hydrolase (249 aa).

Zn(2+)-binding residues include His54, His56, Asp58, His59, His113, Asp138, and His176.

This sequence belongs to the metallo-beta-lactamase superfamily. Glyoxalase II family. In terms of assembly, monomer. The cofactor is Zn(2+).

The enzyme catalyses an S-(2-hydroxyacyl)glutathione + H2O = a 2-hydroxy carboxylate + glutathione + H(+). The protein operates within secondary metabolite metabolism; methylglyoxal degradation; (R)-lactate from methylglyoxal: step 2/2. In terms of biological role, thiolesterase that catalyzes the hydrolysis of S-D-lactoyl-glutathione to form glutathione and D-lactic acid. This Synechococcus sp. (strain CC9605) protein is Hydroxyacylglutathione hydrolase.